Reading from the N-terminus, the 376-residue chain is Queuine tRNA-ribosyltransferase (376 aa).

Asp90 functions as the Proton acceptor in the catalytic mechanism. Residues 90–94, Asp144, Gln193, and Gly220 contribute to the substrate site; that span reads DSGGF. Residues 251-257 are RNA binding; that stretch reads GVGTPED. Residue Asp270 is the Nucleophile of the active site. The tract at residues 275–279 is RNA binding; important for wobble base 34 recognition; that stretch reads TRNAR. Zn(2+) contacts are provided by Cys308, Cys310, Cys313, and His339.

It belongs to the queuine tRNA-ribosyltransferase family. As to quaternary structure, homodimer. Within each dimer, one monomer is responsible for RNA recognition and catalysis, while the other monomer binds to the replacement base PreQ1. It depends on Zn(2+) as a cofactor.

The enzyme catalyses 7-aminomethyl-7-carbaguanine + guanosine(34) in tRNA = 7-aminomethyl-7-carbaguanosine(34) in tRNA + guanine. The protein operates within tRNA modification; tRNA-queuosine biosynthesis. Catalyzes the base-exchange of a guanine (G) residue with the queuine precursor 7-aminomethyl-7-deazaguanine (PreQ1) at position 34 (anticodon wobble position) in tRNAs with GU(N) anticodons (tRNA-Asp, -Asn, -His and -Tyr). Catalysis occurs through a double-displacement mechanism. The nucleophile active site attacks the C1' of nucleotide 34 to detach the guanine base from the RNA, forming a covalent enzyme-RNA intermediate. The proton acceptor active site deprotonates the incoming PreQ1, allowing a nucleophilic attack on the C1' of the ribose to form the product. After dissociation, two additional enzymatic reactions on the tRNA convert PreQ1 to queuine (Q), resulting in the hypermodified nucleoside queuosine (7-(((4,5-cis-dihydroxy-2-cyclopenten-1-yl)amino)methyl)-7-deazaguanosine). The polypeptide is Queuine tRNA-ribosyltransferase (Cupriavidus metallidurans (strain ATCC 43123 / DSM 2839 / NBRC 102507 / CH34) (Ralstonia metallidurans)).